The primary structure comprises 340 residues: MKLAVIGGDGIGPEVTDEALKVLRALRADIETTDLDLGARRYLRNGELLTDEDLALLREHDAILLGAIGAPGSVPPGVLERGLLLKLRFALDHHVNLRPSKLYEGVESPLKNPGEIDFVVVREGTEGAYTGNGGAIRVGTPHETANETSVNTRYGAERVIRYAFELAQSRRRHLTLVHKTNVLVHGGGLWQRTVDEVAREYPEVTVDYNHIDAATIYLVTDPSRFDVIVTDNLFGDILTDEAGAISGGIGLAASGNIDATGTNPSMFEPVHGSAPDIMGKGIADPTAAILSAAMMLRHLGDEANAVRIEEAVARDVAGRDPEAPISTTEVGDRIAAAVVA.

Substrate is bound by residues Arg-88, Arg-98, Arg-122, and Asp-212. Residues Asp-212, Asp-236, and Asp-240 each contribute to the Mg(2+) site. 272–284 (GSAPDIMGKGIAD) contributes to the NAD(+) binding site.

This sequence belongs to the isocitrate and isopropylmalate dehydrogenases family. LeuB type 2 subfamily. Homodimer. It depends on Mg(2+) as a cofactor. The cofactor is Mn(2+).

It is found in the cytoplasm. It catalyses the reaction (2R,3S)-3-isopropylmalate + NAD(+) = 4-methyl-2-oxopentanoate + CO2 + NADH. It functions in the pathway amino-acid biosynthesis; L-leucine biosynthesis; L-leucine from 3-methyl-2-oxobutanoate: step 3/4. Catalyzes the oxidation of 3-carboxy-2-hydroxy-4-methylpentanoate (3-isopropylmalate) to 3-carboxy-4-methyl-2-oxopentanoate. The product decarboxylates to 4-methyl-2 oxopentanoate. The polypeptide is 3-isopropylmalate dehydrogenase (Corynebacterium efficiens (strain DSM 44549 / YS-314 / AJ 12310 / JCM 11189 / NBRC 100395)).